The sequence spans 450 residues: Probable glycine dehydrogenase (decarboxylating) subunit 1 (450 aa).

This sequence belongs to the GcvP family. N-terminal subunit subfamily. In terms of assembly, the glycine cleavage system is composed of four proteins: P, T, L and H. In this organism, the P 'protein' is a heterodimer of two subunits.

The enzyme catalyses N(6)-[(R)-lipoyl]-L-lysyl-[glycine-cleavage complex H protein] + glycine + H(+) = N(6)-[(R)-S(8)-aminomethyldihydrolipoyl]-L-lysyl-[glycine-cleavage complex H protein] + CO2. The glycine cleavage system catalyzes the degradation of glycine. The P protein binds the alpha-amino group of glycine through its pyridoxal phosphate cofactor; CO(2) is released and the remaining methylamine moiety is then transferred to the lipoamide cofactor of the H protein. In Staphylococcus haemolyticus (strain JCSC1435), this protein is Probable glycine dehydrogenase (decarboxylating) subunit 1.